Here is a 230-residue protein sequence, read N- to C-terminus: Small ribosomal subunit protein uS3c (230 aa).

The region spanning 39–109 (IRSFIHGKLS…QIRVNVVEIS (71 aa)) is the KH type-2 domain.

This sequence belongs to the universal ribosomal protein uS3 family. As to quaternary structure, part of the 30S ribosomal subunit.

The protein localises to the plastid. The protein resides in the chloroplast. The sequence is that of Small ribosomal subunit protein uS3c (rps3) from Porphyra purpurea (Red seaweed).